The following is a 211-amino-acid chain: Troponin I, cardiac muscle (211 aa).

The segment at 1–24 is disordered; sequence MADESSDAAGEPQPAPAPVRRRSS. At Ala2 the chain carries N-acetylalanine. A phosphoserine mark is found at Ser5 and Ser6. A phosphoserine; by PKA and PKD/PRKD1 mark is found at Ser23 and Ser24. Tyr27 is subject to Phosphotyrosine. Residue Thr32 is modified to Phosphothreonine; by STK4/MST1. The interval 33 to 80 is involved in binding TNC; that stretch reads EPHAKKKSKISASRKLQLKTLMLQIAKQEMEREAEERRGEKGRVLRTR. Ser43 and Ser45 each carry phosphoserine; by PKC/PRKCE. Residue Thr52 is modified to Phosphothreonine; by STK4/MST1. The residue at position 79 (Thr79) is a Phosphothreonine. Phosphothreonine; by STK4/MST1 is present on residues Thr130 and Thr144. The segment at 130–151 is involved in binding TNC and actin; the sequence is TQKIYDLRGKFKRPTLRRVRIS. Phosphoserine occurs at positions 151, 167, and 200.

Belongs to the troponin I family. In terms of assembly, interacts with TRIM63. Binds to actin and tropomyosin. Interacts with STK4/MST1. Post-translationally, phosphorylated at Ser-23 and Ser-24 by PRKD1; phosphorylation reduces myofilament calcium sensitivity. Phosphorylated preferentially at Thr-32. Phosphorylation by STK4/MST1 alters its binding affinity to TNNC1 (cardiac Tn-C) and TNNT2 (cardiac Tn-T). Phosphorylated at Ser-43 and Ser-45 by PRKCE; phosphorylation increases myocardium contractile dysfunction.

Functionally, troponin I is the inhibitory subunit of troponin, the thin filament regulatory complex which confers calcium-sensitivity to striated muscle actomyosin ATPase activity. The sequence is that of Troponin I, cardiac muscle (Tnni3) from Mus musculus (Mouse).